The chain runs to 333 residues: UDP-N-acetylenolpyruvoylglucosamine reductase (333 aa).

Residues Leu12–Asp176 form the FAD-binding PCMH-type domain. Residue Arg153 is part of the active site. Ser221 acts as the Proton donor in catalysis. Glu317 is an active-site residue.

It belongs to the MurB family. Requires FAD as cofactor.

It is found in the cytoplasm. It catalyses the reaction UDP-N-acetyl-alpha-D-muramate + NADP(+) = UDP-N-acetyl-3-O-(1-carboxyvinyl)-alpha-D-glucosamine + NADPH + H(+). It functions in the pathway cell wall biogenesis; peptidoglycan biosynthesis. Functionally, cell wall formation. This Idiomarina loihiensis (strain ATCC BAA-735 / DSM 15497 / L2-TR) protein is UDP-N-acetylenolpyruvoylglucosamine reductase.